The chain runs to 212 residues: Octanoyltransferase (212 aa).

One can recognise a BPL/LPL catalytic domain in the interval 30–205 (ETTVDELWCL…ELVEGLGHSQ (176 aa)). Substrate-binding positions include 69–76 (RGGQVTYH), 136–138 (SLG), and 149–151 (GLA). The active-site Acyl-thioester intermediate is the Cys-167.

Belongs to the LipB family.

The protein resides in the cytoplasm. The enzyme catalyses octanoyl-[ACP] + L-lysyl-[protein] = N(6)-octanoyl-L-lysyl-[protein] + holo-[ACP] + H(+). Its pathway is protein modification; protein lipoylation via endogenous pathway; protein N(6)-(lipoyl)lysine from octanoyl-[acyl-carrier-protein]: step 1/2. Functionally, catalyzes the transfer of endogenously produced octanoic acid from octanoyl-acyl-carrier-protein onto the lipoyl domains of lipoate-dependent enzymes. Lipoyl-ACP can also act as a substrate although octanoyl-ACP is likely to be the physiological substrate. This chain is Octanoyltransferase, found in Marinobacter nauticus (strain ATCC 700491 / DSM 11845 / VT8) (Marinobacter aquaeolei).